The chain runs to 137 residues: S-adenosylmethionine decarboxylase proenzyme (137 aa).

The Schiff-base intermediate with substrate; via pyruvic acid role is filled by S63. At S63 the chain carries Pyruvic acid (Ser); by autocatalysis. The Proton acceptor; for processing activity role is filled by H68. The active-site Proton donor; for catalytic activity is C83.

This sequence belongs to the prokaryotic AdoMetDC family. Type 1 subfamily. Heterotetramer of two alpha and two beta chains arranged as a dimer of alpha/beta heterodimers. Pyruvate is required as a cofactor. Post-translationally, is synthesized initially as an inactive proenzyme. Formation of the active enzyme involves a self-maturation process in which the active site pyruvoyl group is generated from an internal serine residue via an autocatalytic post-translational modification. Two non-identical subunits are generated from the proenzyme in this reaction, and the pyruvate is formed at the N-terminus of the alpha chain, which is derived from the carboxyl end of the proenzyme. The post-translation cleavage follows an unusual pathway, termed non-hydrolytic serinolysis, in which the side chain hydroxyl group of the serine supplies its oxygen atom to form the C-terminus of the beta chain, while the remainder of the serine residue undergoes an oxidative deamination to produce ammonia and the pyruvoyl group blocking the N-terminus of the alpha chain.

The enzyme catalyses S-adenosyl-L-methionine + H(+) = S-adenosyl 3-(methylsulfanyl)propylamine + CO2. It participates in amine and polyamine biosynthesis; S-adenosylmethioninamine biosynthesis; S-adenosylmethioninamine from S-adenosyl-L-methionine: step 1/1. Its function is as follows. Catalyzes the decarboxylation of S-adenosylmethionine to S-adenosylmethioninamine (dcAdoMet), the propylamine donor required for the synthesis of the polyamines spermine and spermidine from the diamine putrescine. The sequence is that of S-adenosylmethionine decarboxylase proenzyme from Fervidobacterium nodosum (strain ATCC 35602 / DSM 5306 / Rt17-B1).